The sequence spans 556 residues: Optineurin (556 aa).

Positions 1–33 are disordered; it reads MSSKPQIRPAENGEHCRSKMENGMDSMAPPTLS. Positions 11–22 are enriched in basic and acidic residues; the sequence is ENGEHCRSKMEN. Residues 38-164 adopt a coiled-coil conformation; that stretch reads EEMVQQMKEL…SELQVKLNIA (127 aa). An LIR motif is present at residues 168-173; it reads DSFVEI. Positions 219 to 487 form a coiled coil; sequence VSQLLCCLRN…LLKEQQNLED (269 aa). The interval 245-274 is disordered; that stretch reads ERLSKMENETSNCLESGTQTNQEEESSEAI. A compositionally biased stretch (polar residues) spans 253–265; sequence ETSNCLESGTQTN. The UBAN signature appears at 453-458; that stretch reads DFHAER. Positions 496–524 are disordered; the sequence is MQNRHGARAPDREHSPRLVQRGTGSQEWP. Residues 526–556 form a CCHC NOA-type zinc finger; it reads QRNISIYSCPKCEEILPDLDTLQIHVMDCIN. Cys-534, Cys-537, His-550, and Cys-554 together coordinate Zn(2+).

Binds to linear ubiquitin chains. Interacts with LC3 family members. Expressed in erythrocytes, skeletal muscle, heart, spleen and brain. Weakly expressed in lung and liver (at protein level).

It is found in the cytoplasm. It localises to the perinuclear region. The protein localises to the golgi apparatus. The protein resides in the trans-Golgi network. Its subcellular location is the cytoplasmic vesicle. It is found in the recycling endosome. It localises to the autophagosome. Probably part of the TNF-alpha signaling pathway that can shift the equilibrium toward induction of cell death. May act by regulating membrane trafficking and cellular morphogenesis. May act as autophagy receptor that interacts directly with both the cargo to become degraded and an autophagy modifier of the MAP1 LC3 family. This chain is Optineurin (OPTN), found in Gallus gallus (Chicken).